We begin with the raw amino-acid sequence, 247 residues long: tRNA (guanine-N(1)-)-methyltransferase (247 aa).

Residues Gly-117 and 136–141 (LGDFVL) contribute to the S-adenosyl-L-methionine site.

The protein belongs to the RNA methyltransferase TrmD family. In terms of assembly, homodimer.

It is found in the cytoplasm. It catalyses the reaction guanosine(37) in tRNA + S-adenosyl-L-methionine = N(1)-methylguanosine(37) in tRNA + S-adenosyl-L-homocysteine + H(+). Its function is as follows. Specifically methylates guanosine-37 in various tRNAs. This chain is tRNA (guanine-N(1)-)-methyltransferase, found in Myxococcus xanthus (strain DK1622).